We begin with the raw amino-acid sequence, 1128 residues long: Inactive phospholipase C-like protein 2 (1128 aa).

The disordered stretch occupies residues 1–129; it reads MAECGRGAAG…KKTVSFSSMP (129 aa). Residue A2 is modified to N-acetylalanine. A Phosphoserine modification is found at S16. Low complexity predominate over residues 20-30; sequence ALGAKGALKAG. The segment covering 31–43 has biased composition (gly residues); that stretch reads AGEGGGGGGGGRL. T85 is subject to Phosphothreonine. Residues 142–252 form the PH domain; that stretch reads NSMVEGSELK…WVTGLRYLIS (111 aa). Residues 427–571 form the PI-PLC X-box domain; it reads QDMKQPLSHY…LKGKILIKAK (145 aa). Phosphothreonine is present on T585. The 117-residue stretch at 619–735 folds into the PI-PLC Y-box domain; the sequence is LSELVSICKS…GYVLRPAIMR (117 aa). The 130-residue stretch at 735–864 folds into the C2 domain; sequence REEVSFFSAN…TGYRHVPLQS (130 aa). Residues 1100–1128 are disordered; that stretch reads KPGTENSEAQKPRRSLEAIPEKASDENGD. Positions 1107–1128 are enriched in basic and acidic residues; sequence EAQKPRRSLEAIPEKASDENGD. Position 1114 is a phosphoserine (S1114).

Ubiquitously expressed, with a strong expression in skeletal muscle.

The protein localises to the cytoplasm. May play an role in the regulation of Ins(1,4,5)P3 around the endoplasmic reticulum. This chain is Inactive phospholipase C-like protein 2 (Plcl2), found in Mus musculus (Mouse).